Here is a 1164-residue protein sequence, read N- to C-terminus: DNA-directed RNA polymerase 132 kDa polypeptide (1164 aa).

This sequence belongs to the RNA polymerase beta chain family. In terms of assembly, the DNA-dependent RNA polymerase used for intermediate and late genes expression consists of eight subunits (147) kDa, (133) kDa, (35) kDa, (30) kDa, (22) kDa, (19) kDa, (18) kDa and (7) kDa totalling more than 500 kDa in mass. The same holoenzyme, with the addition of the transcription-specificity factor RAP94, is used for early gene expression.

The protein localises to the virion. It carries out the reaction RNA(n) + a ribonucleoside 5'-triphosphate = RNA(n+1) + diphosphate. Its function is as follows. Part of the DNA-dependent RNA polymerase which catalyzes the transcription of viral DNA into RNA using the four ribonucleoside triphosphates as substrates. Responsible for the transcription of early, intermediate and late genes. DNA-dependent RNA polymerase associates with the early transcription factor (ETF), itself composed of D6 and A7, thereby allowing the early genes transcription. Late transcription, and probably also intermediate transcription, require newly synthesized RNA polymerase. The polypeptide is DNA-directed RNA polymerase 132 kDa polypeptide (RPO132) (Oryctolagus cuniculus (Rabbit)).